The chain runs to 1513 residues: DNA-directed RNA polymerase subunit beta'' (1513 aa).

Zn(2+) contacts are provided by C220, C296, C303, and C306. Positions 644–769 are disordered; sequence RTREKDSENE…EYGNPEEDSV (126 aa). Over residues 659-679 the composition is skewed to basic and acidic residues; that stretch reads NEYRTREEECKTLEDEYRTRE. Over residues 680–707 the composition is skewed to acidic residues; it reads EEYETLEDEYGIPENEYETLEDEYGILE. Positions 726 to 737 are enriched in basic and acidic residues; that stretch reads NKYRPREDKYGT. Acidic residues predominate over residues 738–767; the sequence is LEEDSEDEHGTLEEDSEEDSEDEYGNPEED.

It belongs to the RNA polymerase beta' chain family. RpoC2 subfamily. As to quaternary structure, in plastids the minimal PEP RNA polymerase catalytic core is composed of four subunits: alpha, beta, beta', and beta''. When a (nuclear-encoded) sigma factor is associated with the core the holoenzyme is formed, which can initiate transcription. Zn(2+) serves as cofactor.

It is found in the plastid. The protein localises to the chloroplast. It catalyses the reaction RNA(n) + a ribonucleoside 5'-triphosphate = RNA(n+1) + diphosphate. In terms of biological role, DNA-dependent RNA polymerase catalyzes the transcription of DNA into RNA using the four ribonucleoside triphosphates as substrates. The chain is DNA-directed RNA polymerase subunit beta'' from Oryza nivara (Indian wild rice).